The chain runs to 56 residues: Small ribosomal subunit protein uS14 (56 aa).

Residues cysteine 21, cysteine 24, cysteine 39, and cysteine 42 each contribute to the Zn(2+) site.

Belongs to the universal ribosomal protein uS14 family. Component of the 40S small ribosomal subunit. Requires Zn(2+) as cofactor.

Its subcellular location is the cytoplasm. The protein localises to the cytosol. It localises to the rough endoplasmic reticulum. The protein is Small ribosomal subunit protein uS14 (RpS29) of Spodoptera frugiperda (Fall armyworm).